The chain runs to 204 residues: Large ribosomal subunit protein uL4 (204 aa).

The disordered stretch occupies residues 53 to 77; it reads ISDVSGTTAKPYSQKRTGRARQGSL. Residues 56–67 show a composition bias toward polar residues; sequence VSGTTAKPYSQK.

This sequence belongs to the universal ribosomal protein uL4 family. Part of the 50S ribosomal subunit.

One of the primary rRNA binding proteins, this protein initially binds near the 5'-end of the 23S rRNA. It is important during the early stages of 50S assembly. It makes multiple contacts with different domains of the 23S rRNA in the assembled 50S subunit and ribosome. Its function is as follows. Forms part of the polypeptide exit tunnel. The chain is Large ribosomal subunit protein uL4 from Wolbachia sp. subsp. Brugia malayi (strain TRS).